We begin with the raw amino-acid sequence, 347 residues long: Selenide, water dikinase (347 aa).

The active site involves Cys17. ATP is bound by residues Lys20 and 48–50 (TRD). Asp51 is a binding site for Mg(2+). ATP-binding positions include Asp68, Asp91, and 139-141 (GHS). Asp91 provides a ligand contact to Mg(2+). Asp227 is a binding site for Mg(2+).

The protein belongs to the selenophosphate synthase 1 family. Class I subfamily. Homodimer. Mg(2+) serves as cofactor.

It carries out the reaction hydrogenselenide + ATP + H2O = selenophosphate + AMP + phosphate + 2 H(+). Functionally, synthesizes selenophosphate from selenide and ATP. The sequence is that of Selenide, water dikinase from Salmonella typhimurium (strain LT2 / SGSC1412 / ATCC 700720).